We begin with the raw amino-acid sequence, 137 residues long: MLVIILGIIGLLASSNLVSSSTSTRVGGHLPLTFDPPENELGYWCTYVESCRFCWDCEDGICTSRVWGNNSTSIVENDYVKYCEVSRWGNLCRYDVEEHIYYSMNCSDPKPWNPYKIARKEWKKNEYLRKDLKKDEF.

The N-terminal stretch at 1–20 (MLVIILGIIGLLASSNLVSS) is a signal peptide. Residues Asn-69, Asn-70, and Asn-105 are each glycosylated (N-linked (GlcNAc...) asparagine; by host).

It belongs to the asfivirus MGF 110 family.

Functionally, plays a role in virus cell tropism, and may be required for efficient virus replication in macrophages. The protein is Protein MGF 110-7L of African swine fever virus (isolate Tick/South Africa/Pretoriuskop Pr4/1996) (ASFV).